A 130-amino-acid chain; its full sequence is ATP synthase epsilon chain (130 aa).

It belongs to the ATPase epsilon chain family. In terms of assembly, F-type ATPases have 2 components, CF(1) - the catalytic core - and CF(0) - the membrane proton channel. CF(1) has five subunits: alpha(3), beta(3), gamma(1), delta(1), epsilon(1). CF(0) has three main subunits: a, b and c.

The protein localises to the cell inner membrane. In terms of biological role, produces ATP from ADP in the presence of a proton gradient across the membrane. The chain is ATP synthase epsilon chain from Campylobacter hominis (strain ATCC BAA-381 / DSM 21671 / CCUG 45161 / LMG 19568 / NCTC 13146 / CH001A).